The primary structure comprises 1093 residues: Regulatory protein SWI4 (1093 aa).

Positions 37-147 (IEIATYSETD…FQFDPNNPPP (111 aa)) constitute an HTH APSES-type domain. A DNA-binding region (H-T-H motif) is located at residues 71–92 (ITQVFKIAQFSKTKRTKILEKE). Residues 138–210 (FQFDPNNPPP…NQPNPSPLQN (73 aa)) are disordered. Polar residues predominate over residues 152–172 (NSILRKTSPGTKITSPSSYNK). Residues 179 to 201 (SSSSTSATTTAANKKGKKNASIN) show a composition bias toward low complexity. Phosphoserine is present on Ser-255. Over residues 448-457 (NSMNMSSRSM) the composition is skewed to low complexity. Residues 448-468 (NSMNMSSRSMTPFSAGNTSSQ) are disordered. Over residues 458–468 (TPFSAGNTSSQ) the composition is skewed to polar residues. ANK repeat units lie at residues 520 to 549 (QGHT…NALQ) and 641 to 670 (IGNT…STDI). Ser-806 carries the phosphoserine modification. Disordered stretches follow at residues 813-855 (RSQS…SSLL) and 973-1017 (QDEE…DAKF). Residues 818 to 837 (SDEKEKAKDNENQVEKKKDP) show a composition bias toward basic and acidic residues. Residues 846–855 (PSLESPSSLL) are compositionally biased toward low complexity. Residues 1000-1010 (KSTSETSSPKN) are compositionally biased toward polar residues.

Component of the transcription complex SCB-binding factor (SBF) composed of SWI6 and SWI4. Interacts with MSA2.

Functionally, part of a complex involved in cell-cycle-dependent transcription. SWI4 and SWI6 are required for formation of the cell-cycle box factor-DNA complex. The repeated element in the upstream region of HO (5'-CACGAAAA-3') is called the cell cycle box (CCB). The protein is Regulatory protein SWI4 (SWI4) of Saccharomyces cerevisiae (strain ATCC 204508 / S288c) (Baker's yeast).